Consider the following 88-residue polypeptide: Small ribosomal subunit protein bS20 (88 aa).

It belongs to the bacterial ribosomal protein bS20 family.

Functionally, binds directly to 16S ribosomal RNA. This chain is Small ribosomal subunit protein bS20, found in Renibacterium salmoninarum (strain ATCC 33209 / DSM 20767 / JCM 11484 / NBRC 15589 / NCIMB 2235).